Consider the following 916-residue polypeptide: Protein O-GlcNAcase (916 aa).

Residues 1–46 form a disordered region; the sequence is MVQKESQAALEERESERNANPAAASGASLEQSVAPAPGEDNPSGAG. Residues 60 to 336 enclose the GH84 domain; it reads FLCGVVEGFY…TLATWYKSNM (277 aa). Residues G67, K98, and D174 each coordinate a protein. The Proton donor role is filled by D175. A protein-binding positions include Y219, 278–280, D285, and N313; that span reads WDN. S364 carries the phosphoserine modification. Residues 443–465 form a disordered region; sequence ALSGEPSVLTKEEEKKQPDEEPM. Positions 452–461 are enriched in basic and acidic residues; sequence TKEEEKKQPD.

It belongs to the glycosyl hydrolase 84 family. As to quaternary structure, monomer. Interacts with CLOCK. In terms of processing, proteolytically cleaved by caspase-3 during apoptosis. The fragments interact with each other; cleavage does not decrease enzyme activity.

The protein localises to the cytoplasm. Its subcellular location is the nucleus. The catalysed reaction is 3-O-(N-acetyl-beta-D-glucosaminyl)-L-seryl-[protein] + H2O = N-acetyl-D-glucosamine + L-seryl-[protein]. It catalyses the reaction 3-O-(N-acetyl-beta-D-glucosaminyl)-L-threonyl-[protein] + H2O = L-threonyl-[protein] + N-acetyl-D-glucosamine. Its function is as follows. Cleaves GlcNAc but not GalNAc from O-glycosylated proteins. Deglycosylates a large and diverse number of proteins, such as CRYAB, ELK1, GSDMD, LMNB1 and TAB1. Can use p-nitrophenyl-beta-GlcNAc and 4-methylumbelliferone-GlcNAc as substrates but not p-nitrophenyl-beta-GalNAc or p-nitrophenyl-alpha-GlcNAc (in vitro). Does not bind acetyl-CoA and does not have histone acetyltransferase activity. This Mus musculus (Mouse) protein is Protein O-GlcNAcase.